The sequence spans 217 residues: Probable transaldolase (217 aa).

The active-site Schiff-base intermediate with substrate is the K83.

The protein belongs to the transaldolase family. Type 3B subfamily.

The protein resides in the cytoplasm. It carries out the reaction D-sedoheptulose 7-phosphate + D-glyceraldehyde 3-phosphate = D-erythrose 4-phosphate + beta-D-fructose 6-phosphate. The protein operates within carbohydrate degradation; pentose phosphate pathway; D-glyceraldehyde 3-phosphate and beta-D-fructose 6-phosphate from D-ribose 5-phosphate and D-xylulose 5-phosphate (non-oxidative stage): step 2/3. In terms of biological role, transaldolase is important for the balance of metabolites in the pentose-phosphate pathway. This is Probable transaldolase from Chelativorans sp. (strain BNC1).